Here is a 696-residue protein sequence, read N- to C-terminus: Mitosis initiation protein fs(1)Ya (696 aa).

Disordered regions lie at residues 245–285 (NAST…RAWK), 336–379 (EHSS…YSTS), and 457–492 (IKFETPPKSSQQMRSNGEGDETKDQFFTPEPGTPEI). Composition is skewed to low complexity over residues 270–281 (QQQQQQQQPLQQ) and 361–379 (SESSASEVNSGSSSSYSTS). Positions 448 to 696 (TGAGINKKQI…REPIERMRRQ (249 aa)) are rich in charged AA. Residues Thr478, Thr484, and Thr489 each carry the phosphothreonine modification. 2 short sequence motifs (nuclear localization signal) span residues 512–520 (PKKDKPKEK) and 534–538 (QPRVR). Disordered regions lie at residues 555-586 (DVGEPEVVDAEEEDEVFRPTNASTCNDKKLEA) and 603-696 (PASL…MRRQ). Residues 557 to 569 (GEPEVVDAEEEDE) are compositionally biased toward acidic residues. Composition is skewed to basic and acidic residues over residues 607-624 (RGEREKDRDRDRDSDKEN) and 685-696 (RPREPIERMRRQ).

The protein resides in the nucleus envelope. It is found in the nucleus. It localises to the nucleoplasm. Its subcellular location is the cytoplasm. Its function is as follows. Cell cycle-dependent nuclear envelope component required for embryonic mitosis. This is Mitosis initiation protein fs(1)Ya (fs(1)Ya) from Drosophila melanogaster (Fruit fly).